We begin with the raw amino-acid sequence, 447 residues long: Signal recognition particle 54 kDa protein (447 aa).

Residues 103–110 (GVQGSGKT), 185–189 (DTAGR), and 245–248 (TKMD) each bind GTP.

It belongs to the GTP-binding SRP family. SRP54 subfamily. In terms of assembly, part of the signal recognition particle protein translocation system, which is composed of SRP and FtsY. Archaeal SRP consists of a 7S RNA molecule of 300 nucleotides and two protein subunits: SRP54 and SRP19.

It is found in the cytoplasm. It carries out the reaction GTP + H2O = GDP + phosphate + H(+). Functionally, involved in targeting and insertion of nascent membrane proteins into the cytoplasmic membrane. Binds to the hydrophobic signal sequence of the ribosome-nascent chain (RNC) as it emerges from the ribosomes. The SRP-RNC complex is then targeted to the cytoplasmic membrane where it interacts with the SRP receptor FtsY. This chain is Signal recognition particle 54 kDa protein, found in Saccharolobus islandicus (strain M.16.27) (Sulfolobus islandicus).